The sequence spans 205 residues: Probable molybdenum cofactor guanylyltransferase (205 aa).

Residues 9 to 11 (LAG), Lys21, Asp66, and Asp95 contribute to the GTP site. Asp95 lines the Mg(2+) pocket.

Belongs to the MobA family. It depends on Mg(2+) as a cofactor.

It localises to the cytoplasm. It carries out the reaction Mo-molybdopterin + GTP + H(+) = Mo-molybdopterin guanine dinucleotide + diphosphate. Its function is as follows. Transfers a GMP moiety from GTP to Mo-molybdopterin (Mo-MPT) cofactor (Moco or molybdenum cofactor) to form Mo-molybdopterin guanine dinucleotide (Mo-MGD) cofactor. The sequence is that of Probable molybdenum cofactor guanylyltransferase from Pelotomaculum thermopropionicum (strain DSM 13744 / JCM 10971 / SI).